The sequence spans 702 residues: Ribosomal RNA large subunit methyltransferase K/L (702 aa).

Residues 43 to 154 form the THUMP domain; that stretch reads LVYQSLMWSR…KETASIALDL (112 aa).

This sequence belongs to the methyltransferase superfamily. RlmKL family.

It localises to the cytoplasm. The catalysed reaction is guanosine(2445) in 23S rRNA + S-adenosyl-L-methionine = N(2)-methylguanosine(2445) in 23S rRNA + S-adenosyl-L-homocysteine + H(+). It catalyses the reaction guanosine(2069) in 23S rRNA + S-adenosyl-L-methionine = N(2)-methylguanosine(2069) in 23S rRNA + S-adenosyl-L-homocysteine + H(+). In terms of biological role, specifically methylates the guanine in position 2445 (m2G2445) and the guanine in position 2069 (m7G2069) of 23S rRNA. The polypeptide is Ribosomal RNA large subunit methyltransferase K/L (Shigella sonnei (strain Ss046)).